Reading from the N-terminus, the 631-residue chain is Glutamyl-tRNA(Gln) amidotransferase subunit E (631 aa).

Belongs to the GatB/GatE family. GatE subfamily. Heterodimer of GatD and GatE.

The enzyme catalyses L-glutamyl-tRNA(Gln) + L-glutamine + ATP + H2O = L-glutaminyl-tRNA(Gln) + L-glutamate + ADP + phosphate + H(+). In terms of biological role, allows the formation of correctly charged Gln-tRNA(Gln) through the transamidation of misacylated Glu-tRNA(Gln) in organisms which lack glutaminyl-tRNA synthetase. The reaction takes place in the presence of glutamine and ATP through an activated gamma-phospho-Glu-tRNA(Gln). The GatDE system is specific for glutamate and does not act on aspartate. This chain is Glutamyl-tRNA(Gln) amidotransferase subunit E, found in Methanococcus maripaludis (strain C6 / ATCC BAA-1332).